The following is a 176-amino-acid chain: MYSPSSSNYIKDPISTEIIKSKTRNLKKRAEEAILYRSIAEQSSRKLAEISEAYKHKLADMENYLKIKDRETEIIRKNANESLIKDFLPVIDSMDAAIQAEKDNNLIRIRDQMLSILSKYGLQPIKAEGEKFDPYLHEAIGMTQDGEDGKIKYEVQRGYTLNNSVLRTSKVIVVKR.

This sequence belongs to the GrpE family. As to quaternary structure, homodimer.

Its subcellular location is the cytoplasm. Its function is as follows. Participates actively in the response to hyperosmotic and heat shock by preventing the aggregation of stress-denatured proteins, in association with DnaK and GrpE. It is the nucleotide exchange factor for DnaK and may function as a thermosensor. Unfolded proteins bind initially to DnaJ; upon interaction with the DnaJ-bound protein, DnaK hydrolyzes its bound ATP, resulting in the formation of a stable complex. GrpE releases ADP from DnaK; ATP binding to DnaK triggers the release of the substrate protein, thus completing the reaction cycle. Several rounds of ATP-dependent interactions between DnaJ, DnaK and GrpE are required for fully efficient folding. The chain is Protein GrpE from Thermoplasma volcanium (strain ATCC 51530 / DSM 4299 / JCM 9571 / NBRC 15438 / GSS1).